A 194-amino-acid chain; its full sequence is Translation machinery-associated protein 22 (194 aa).

The region spanning 102–173 (VQIKRVERNK…DVQEWLLELY (72 aa)) is the SUI1 domain.

The protein belongs to the DENR family. Interacts with the 40S ribosomal subunit.

Its subcellular location is the cytoplasm. The sequence is that of Translation machinery-associated protein 22 (tma22) from Neosartorya fischeri (strain ATCC 1020 / DSM 3700 / CBS 544.65 / FGSC A1164 / JCM 1740 / NRRL 181 / WB 181) (Aspergillus fischerianus).